We begin with the raw amino-acid sequence, 233 residues long: Large ribosomal subunit protein uL1 (233 aa).

It belongs to the universal ribosomal protein uL1 family. As to quaternary structure, part of the 50S ribosomal subunit.

Functionally, binds directly to 23S rRNA. The L1 stalk is quite mobile in the ribosome, and is involved in E site tRNA release. In terms of biological role, protein L1 is also a translational repressor protein, it controls the translation of the L11 operon by binding to its mRNA. In Syntrophotalea carbinolica (strain DSM 2380 / NBRC 103641 / GraBd1) (Pelobacter carbinolicus), this protein is Large ribosomal subunit protein uL1.